The following is a 325-amino-acid chain: Fatty acid synthase alpha subunit hexA (325 aa).

Asp209 serves as a coordination point for Mg(2+). Acetyl-CoA-binding positions include Asp209–Val211, Glu255–Thr265, Lys279–Asn282, and Ile301–His303. Residue Ser302 coordinates Mg(2+).

Belongs to the thiolase-like superfamily. Fungal fatty acid synthetase subunit alpha family. In terms of assembly, [Alpha(6)beta(6)] hexamers of two multifunctional subunits (alpha and beta). Post-translationally, 4'-phosphopantetheine is transferred from CoA to a specific serine of the acyl carrier domain by the C-terminal PPT domain. This modification is essential for activity because fatty acids are bound in thioester linkage to the sulfhydryl of the prosthetic group.

It carries out the reaction acetyl-CoA + n malonyl-CoA + 2n NADPH + 4n H(+) = a long-chain-acyl-CoA + n CoA + n CO2 + 2n NADP(+).. The catalysed reaction is a fatty acyl-[ACP] + malonyl-[ACP] + H(+) = a 3-oxoacyl-[ACP] + holo-[ACP] + CO2. It catalyses the reaction a (3R)-hydroxyacyl-[ACP] + NADP(+) = a 3-oxoacyl-[ACP] + NADPH + H(+). It functions in the pathway mycotoxin biosynthesis. Its function is as follows. Fatty acid synthase alpha subunit; part of the fragmented gene cluster that mediates the biosynthesis of dothistromin (DOTH), a polyketide toxin very similar in structure to the aflatoxin precursor, versicolorin B. The first step of the pathway is the conversion of acetate to norsolorinic acid (NOR) and requires the fatty acid synthase subunits hexA and hexB, as well as the polyketide synthase pksA. PksA combines a hexanoyl starter unit and 7 malonyl-CoA extender units to synthesize the precursor NOR. The hexanoyl starter unit is provided to the acyl-carrier protein (ACP) domain by the fungal fatty acid synthase hexA/hexB. The second step is the conversion of NOR to averantin (AVN) and requires the norsolorinic acid ketoreductase nor1, which catalyzes the dehydration of norsolorinic acid to form (1'S)-averantin. The cytochrome P450 monooxygenase avnA then catalyzes the hydroxylation of AVN to 5'hydroxyaverantin (HAVN). The next step is performed by adhA that transforms HAVN to averufin (AVF). Averufin might then be converted to hydroxyversicolorone by cypX and avfA. Hydroxyversicolorone is further converted versiconal hemiacetal acetate (VHA) by moxY. VHA is then the substrate for the versiconal hemiacetal acetate esterase est1 to yield versiconal (VAL). Versicolorin B synthase vbsA then converts VAL to versicolorin B (VERB) by closing the bisfuran ring. Then, the activity of the versicolorin B desaturase verB leads to versicolorin A (VERA). DotB, a predicted chloroperoxidase, may perform epoxidation of the A-ring of VERA. Alternatively, a cytochrome P450, such as cypX or avnA could catalyze this step. It is also possible that another, uncharacterized, cytochrome P450 enzyme is responsible for this step. Opening of the epoxide could potentially be achieved by the epoxide hydrolase epoA. However, epoA seems not to be required for DOTH biosynthesis, but other epoxide hydrolases may have the ability to complement this hydrolysis. Alternatively, opening of the epoxide ring could be achieved non-enzymatically. The next step is the deoxygenation of ring A to yield the 5,8-dihydroxyanthraquinone which is most likely catalyzed by the NADPH dehydrogenase encoded by ver1. The last stages of DOTH biosynthesis are proposed to involve hydroxylation of the bisfuran. OrdB and norB might have oxidative roles here. An alternative possibility is that cytochrome P450 monoogenases such as avnA and cypX might perform these steps in addition to previously proposed steps. The chain is Fatty acid synthase alpha subunit hexA from Dothistroma septosporum (Red band needle blight fungus).